Here is a 430-residue protein sequence, read N- to C-terminus: C4-dicarboxylate transport protein (430 aa).

9 helical membrane passes run 8–28 (SLYF…HFYP), 44–64 (LIKM…IAGM), 76–96 (AALL…LVVV), 144–164 (AFAS…GFAL), 184–204 (VIFG…FGAM), 222–242 (LILC…GSIA), 289–309 (VVGL…SIYL), 326–346 (IWHQ…AAGV), and 352–372 (IVLA…LALI).

This sequence belongs to the dicarboxylate/amino acid:cation symporter (DAACS) (TC 2.A.23) family.

The protein resides in the cell inner membrane. Functionally, responsible for the transport of dicarboxylates such as succinate, fumarate, and malate from the periplasm across the membrane. In Pectobacterium atrosepticum (strain SCRI 1043 / ATCC BAA-672) (Erwinia carotovora subsp. atroseptica), this protein is C4-dicarboxylate transport protein.